We begin with the raw amino-acid sequence, 710 residues long: WD repeat-containing protein CG11141 (710 aa).

WD repeat units follow at residues 31–70 and 133–172; these read FFPANLNLTCVDATEEFLAMGSDAGIVFWYNRHTGEMQKL and LHKCVVSCCEWSKNGMKLYSGDRQGVVVLTELDYQAHLSK. Residues 283–307 form a disordered region; sequence LNPKQRSEPSGTHHTSASTSSTRHS. A compositionally biased stretch (low complexity) spans 292–307; the sequence is SGTHHTSASTSSTRHS. Thr488 bears the Phosphothreonine mark. Position 553 is a phosphoserine (Ser553). 2 disordered regions span residues 612–635 and 685–710; these read ASIQTSSRENATNPADDYHVGEPV and DPLAIHKETPATSDSNTSSEWEFLDN. 2 stretches are compositionally biased toward polar residues: residues 613–624 and 694–704; these read SIQTSSRENATN and PATSDSNTSSE.

It belongs to the WD repeat KIAA0329 family.

This chain is WD repeat-containing protein CG11141, found in Drosophila melanogaster (Fruit fly).